Here is a 251-residue protein sequence, read N- to C-terminus: Triosephosphate isomerase (251 aa).

9–11 contributes to the substrate binding site; that stretch reads NWK. The active-site Electrophile is the His-95. Catalysis depends on Glu-167, which acts as the Proton acceptor. Substrate contacts are provided by residues Gly-173, Ser-213, and 234 to 235; that span reads GG. At Ser-213 the chain carries Phosphoserine.

The protein belongs to the triosephosphate isomerase family. In terms of assembly, homodimer.

It localises to the cytoplasm. The catalysed reaction is D-glyceraldehyde 3-phosphate = dihydroxyacetone phosphate. Its pathway is carbohydrate biosynthesis; gluconeogenesis. The protein operates within carbohydrate degradation; glycolysis; D-glyceraldehyde 3-phosphate from glycerone phosphate: step 1/1. Its function is as follows. Involved in the gluconeogenesis. Catalyzes stereospecifically the conversion of dihydroxyacetone phosphate (DHAP) to D-glyceraldehyde-3-phosphate (G3P). In Shouchella clausii (strain KSM-K16) (Alkalihalobacillus clausii), this protein is Triosephosphate isomerase.